Consider the following 619-residue polypeptide: Isocitrate dehydrogenase kinase/phosphatase (619 aa).

ATP contacts are provided by residues 354–360 and lysine 375; that span reads APGIRGM. Residue aspartate 409 is part of the active site.

It belongs to the AceK family.

The protein localises to the cytoplasm. It catalyses the reaction L-seryl-[isocitrate dehydrogenase] + ATP = O-phospho-L-seryl-[isocitrate dehydrogenase] + ADP + H(+). Functionally, bifunctional enzyme which can phosphorylate or dephosphorylate isocitrate dehydrogenase (IDH) on a specific serine residue. This is a regulatory mechanism which enables bacteria to bypass the Krebs cycle via the glyoxylate shunt in response to the source of carbon. When bacteria are grown on glucose, IDH is fully active and unphosphorylated, but when grown on acetate or ethanol, the activity of IDH declines drastically concomitant with its phosphorylation. The chain is Isocitrate dehydrogenase kinase/phosphatase from Bordetella bronchiseptica (strain ATCC BAA-588 / NCTC 13252 / RB50) (Alcaligenes bronchisepticus).